The primary structure comprises 303 residues: Vacuolar protein sorting-associated protein 26B (303 aa).

Belongs to the VPS26 family. As to quaternary structure, component of the retromer complex which consists of VPS29 (MAG1), VPS26 (VPS26A or VPS26B), VPS35 (VPS35A or VPS35B or VPS35C), VPS5/17 (SNX1 or SNX2A or SNX2B). Component of a retromer subcomplex consisting of VPS29 (MAG1), VPS26 (VPS26A or VPS26B), VPS35 (VPS35A or VPS35B or VPS35C).

Its subcellular location is the cytoplasm. The protein localises to the endosome membrane. It is found in the prevacuolar compartment membrane. The protein resides in the golgi apparatus. It localises to the trans-Golgi network membrane. Functionally, plays a role in vesicular protein sorting. Component of the membrane-associated retromer complex which is essential in endosome-to-Golgi retrograde transport. The VPS29-VPS26-VPS35 subcomplex may be involved in recycling of specific cargos from endosome to the plasma membrane. The polypeptide is Vacuolar protein sorting-associated protein 26B (VPS26B) (Arabidopsis thaliana (Mouse-ear cress)).